A 155-amino-acid chain; its full sequence is Large ribosomal subunit protein uL13 (155 aa).

Belongs to the universal ribosomal protein uL13 family. As to quaternary structure, part of the 50S ribosomal subunit.

Its function is as follows. This protein is one of the early assembly proteins of the 50S ribosomal subunit, although it is not seen to bind rRNA by itself. It is important during the early stages of 50S assembly. The sequence is that of Large ribosomal subunit protein uL13 from Aeropyrum pernix (strain ATCC 700893 / DSM 11879 / JCM 9820 / NBRC 100138 / K1).